We begin with the raw amino-acid sequence, 378 residues long: Circumsporozoite protein (378 aa).

The first 22 residues, 1 to 22, serve as a signal peptide directing secretion; the sequence is MKNFNLLAVSSILLVDLFPTHC. The disordered stretch occupies residues 50 to 291; it reads AQVRQSASRG…GQGQNNEGAN (242 aa). Basic and acidic residues-rich tracts occupy residues 66 to 92 and 101 to 126; these read PKNE…ENKL and ARAE…DGAR. Positions 80–88 are required for the binding to heparan sulfate proteoglycans (HSPGs) on the surface of host hepatocytes; that stretch reads KKVEPKKPR. Residues 91–95 form a region I; contains the proteolytic cleavage site region; the sequence is KLKQP. 24 tandem repeats follow at residues 99–104, 105–110, 111–116, 117–122, 123–128, 129–134, 135–140, 141–146, 147–152, 153–158, 159–164, 165–170, 171–176, 177–182, 183–188, 189–194, 195–200, 201–206, 212–222, 223–233, 234–244, 245–255, 256–266, and 267–277. Residues 99–206 are 18 X 6 AA tandem repeats of D-G-A-R-A-[EA]; it reads DGARAEDGAR…ARAADGARAE (108 aa). Over residues 127–140 the composition is skewed to low complexity; the sequence is AADGARAADGARAA. The span at 141–162 shows a compositional bias: basic and acidic residues; the sequence is DGARAEDGARAEDGARAEDGAR. Positions 163-200 are enriched in low complexity; that stretch reads AADGARAADGARAADGARAADGARAADGARAADGARAA. Residues 212-277 form a 6 X 11 AA tandem repeats of G-N-[QR]-[AE]-G-G-Q-A-G-A-G region; it reads GNREGGQAGA…NRAGGQAGAG (66 aa). Residues 214–283 are compositionally biased toward gly residues; sequence REGGQAGAGG…AGAGDAGAGQ (70 aa). The 53-residue stretch at 304–356 folds into the TSP type-1 domain; the sequence is KIRSTIGVEWSPCTVTCGKGVRMRRKVSAANKKPEELDVNDLETEVCTMDKCA. 2 disulfides stabilise this stretch: cysteine 316-cysteine 350 and cysteine 320-cysteine 355. A glycan (O-linked (Fuc) threonine) is linked at threonine 319. The GPI-anchor amidated cysteine moiety is linked to residue cysteine 355. The propeptide at 356 to 378 is removed in mature form; sequence AGIFNVVSNSLGLVILLVLALFN.

The protein belongs to the plasmodium circumsporozoite protein family. In terms of processing, during host cell invasion, proteolytically cleaved at the cell membrane in the region I by a papain-like cysteine protease of parasite origin. Cleavage is triggered by the sporozoite contact with highly sulfated heparan sulfate proteoglycans (HSPGs) present on the host hepatocyte cell surface. Cleavage exposes the TSP type-1 (TSR) domain and is required for productive invasion of host hepatocytes but not for adhesion to the host cell membrane. Cleavage is dispensable for sporozoite development in the oocyst, motility and for traversal of host and vector cells. Post-translationally, O-glycosylated; maybe by POFUT2.

Its subcellular location is the cell membrane. The protein resides in the cytoplasm. Functionally, essential sporozoite protein. In the mosquito vector, required for sporozoite development in the oocyst, migration through the vector hemolymph and entry into the vector salivary glands. In the vertebrate host, required for sporozoite migration through the host dermis and infection of host hepatocytes. Binds to highly sulfated heparan sulfate proteoglycans (HSPGs) on the surface of host hepatocytes. In the vertebrate host, binds to highly sulfated heparan sulfate proteoglycans (HSPGs) on the surface of host hepatocytes and is required for sporozoite invasion of the host hepatocytes. The polypeptide is Circumsporozoite protein (Plasmodium cynomolgi (strain London)).